A 500-amino-acid polypeptide reads, in one-letter code: Glycerol kinase (500 aa).

Threonine 13 serves as a coordination point for ADP. ATP-binding residues include threonine 13, threonine 14, and serine 15. Threonine 13 lines the sn-glycerol 3-phosphate pocket. ADP is bound at residue arginine 17. Residues arginine 83, glutamate 84, tyrosine 135, and aspartate 244 each contribute to the sn-glycerol 3-phosphate site. 5 residues coordinate glycerol: arginine 83, glutamate 84, tyrosine 135, aspartate 244, and glutamine 245. ADP is bound by residues threonine 266 and glycine 309. Positions 266, 309, 313, and 410 each coordinate ATP. Residues glycine 410 and asparagine 414 each coordinate ADP.

It belongs to the FGGY kinase family.

The enzyme catalyses glycerol + ATP = sn-glycerol 3-phosphate + ADP + H(+). Its pathway is polyol metabolism; glycerol degradation via glycerol kinase pathway; sn-glycerol 3-phosphate from glycerol: step 1/1. Its activity is regulated as follows. Inhibited by fructose 1,6-bisphosphate (FBP). In terms of biological role, key enzyme in the regulation of glycerol uptake and metabolism. Catalyzes the phosphorylation of glycerol to yield sn-glycerol 3-phosphate. This is Glycerol kinase from Burkholderia ambifaria (strain MC40-6).